Reading from the N-terminus, the 1135-residue chain is Topless-related protein 4 (1135 aa).

One can recognise a LisH domain in the interval 4–36 (LSRELVFLILQFLDEEKFKDTVHRLEKESGFFF). Residues 34–92 (FFFNMRYFEDSVTAGEWDDVEKYLSGFTKVDDNRYSMKIFFEIRKQKYLEALDKKDHAK) form the CTLH domain. Ser-214 carries the post-translational modification Phosphoserine. The tract at residues 281–303 (LKRERPRSPPTNSLSMDYQTADS) is disordered. The span at 290-303 (PTNSLSMDYQTADS) shows a compositional bias: polar residues. 12 WD repeats span residues 355-395 (SQGS…KLVS), 417-456 (EYTA…DLRN), 462-503 (AHAG…KLHT), 506-547 (GHEA…SRVD), 550-593 (APGR…VKRT), 597-636 (LGKR…LLSS), 638-680 (AAEG…RILH), 776-815 (LLPA…RNLL), 843-881 (NKED…TMTT), 884-924 (APPP…VKSK), 927-966 (GHQK…KQAS), and 1020-1059 (ESSG…LKCR). Positions 1095 to 1135 (DGGVHVIEPPGPEGKWGISAPPENGAGPSVSSAPGSDQQPR) are disordered. Residues 1119-1135 (GAGPSVSSAPGSDQQPR) are compositionally biased toward low complexity.

In terms of assembly, tetramer. Interacts with WUS (via the C-terminal domain). Interacts with SPL (via EAR motif). Interacts with SPEAR3/TIE1. Binds to and corepresses GAF1/IDD2 at the promoter of GA20OX2 gene.

It is found in the nucleus. Transcription corepressor of Zinc finger transcription factors GAF1/IDD2 and ENY/IDD1 in regulation of gibberellin homeostasis and signaling. The protein is Topless-related protein 4 (TPR4) of Arabidopsis thaliana (Mouse-ear cress).